The chain runs to 379 residues: Cytochrome b (379 aa).

The next 4 membrane-spanning stretches (helical) occupy residues 33 to 53 (FGSL…FLAM), 77 to 98 (WLIR…YLHI), 113 to 133 (WNIG…GYVL), and 178 to 198 (FFAF…VHLL). Residues histidine 83 and histidine 97 each coordinate heme b. Heme b is bound by residues histidine 182 and histidine 196. Histidine 201 contributes to the a ubiquinone binding site. The next 4 membrane-spanning stretches (helical) occupy residues 226 to 246 (TKDF…VLFF), 288 to 308 (MGGV…PHIQ), 320 to 340 (ISQF…WIGG), and 347 to 367 (FIII…AFLP).

Belongs to the cytochrome b family. In terms of assembly, the cytochrome bc1 complex contains 11 subunits: 3 respiratory subunits (MT-CYB, CYC1 and UQCRFS1), 2 core proteins (UQCRC1 and UQCRC2) and 6 low-molecular weight proteins (UQCRH/QCR6, UQCRB/QCR7, UQCRQ/QCR8, UQCR10/QCR9, UQCR11/QCR10 and a cleavage product of UQCRFS1). This cytochrome bc1 complex then forms a dimer. Requires heme b as cofactor.

Its subcellular location is the mitochondrion inner membrane. Component of the ubiquinol-cytochrome c reductase complex (complex III or cytochrome b-c1 complex) that is part of the mitochondrial respiratory chain. The b-c1 complex mediates electron transfer from ubiquinol to cytochrome c. Contributes to the generation of a proton gradient across the mitochondrial membrane that is then used for ATP synthesis. The sequence is that of Cytochrome b (MT-CYB) from Dipodomys ordii (Ord's kangaroo rat).